Reading from the N-terminus, the 341-residue chain is Phosphate acyltransferase (341 aa).

Belongs to the PlsX family. As to quaternary structure, homodimer. Probably interacts with PlsY.

Its subcellular location is the cytoplasm. It catalyses the reaction a fatty acyl-[ACP] + phosphate = an acyl phosphate + holo-[ACP]. It participates in lipid metabolism; phospholipid metabolism. Its function is as follows. Catalyzes the reversible formation of acyl-phosphate (acyl-PO(4)) from acyl-[acyl-carrier-protein] (acyl-ACP). This enzyme utilizes acyl-ACP as fatty acyl donor, but not acyl-CoA. The chain is Phosphate acyltransferase from Saccharophagus degradans (strain 2-40 / ATCC 43961 / DSM 17024).